The chain runs to 185 residues: Large ribosomal subunit protein uL5 (185 aa).

It belongs to the universal ribosomal protein uL5 family. In terms of assembly, part of the 50S ribosomal subunit; part of the 5S rRNA/L5/L18/L25 subcomplex. Contacts the 5S rRNA and the P site tRNA. Forms a bridge to the 30S subunit in the 70S ribosome.

Functionally, this is one of the proteins that bind and probably mediate the attachment of the 5S RNA into the large ribosomal subunit, where it forms part of the central protuberance. In the 70S ribosome it contacts protein S13 of the 30S subunit (bridge B1b), connecting the 2 subunits; this bridge is implicated in subunit movement. Contacts the P site tRNA; the 5S rRNA and some of its associated proteins might help stabilize positioning of ribosome-bound tRNAs. The protein is Large ribosomal subunit protein uL5 of Bartonella henselae (strain ATCC 49882 / DSM 28221 / CCUG 30454 / Houston 1) (Rochalimaea henselae).